The following is a 551-amino-acid chain: MTSHRLPEITLTPELTAAAAEAKAWPFEEARKILKRYAKTGLPETVIFETGYGPSGLPHIGTFGEVARTSMVRHAFRILTQDKVKTRLICFSDDLDGMRKVPDNVPDRAALEPYLQMPLSSVPNPFGGDYKSFAEHNNAMLCRFLDTFGFDYEFASATEYYRSGRFDTVLLKAVERYDDIMKVMLPTLGEERQATYSPFLPISPKSGRVLYVPMKKVDAKAGTITFDDEDGEETTLSVTGGKVKLQWKPDFGMRWAALGVDFEMFGKDHQTNAGIYDRICEILGGRAPEHFVYELFLDQLGQKISKSKGNGISIDEWLAYAPTESLTLYNFQKPKTAKKLYFDVIPKTVDEYFTYLSAYARQEWKDRLNNPVWHIHYGNPPKADLPVTFALMLNLVSASNAESPAVLWGFISRHVPGVTPENNPELDALVGYAIRYFNDFVKPTKKFRAPDDVERAALEALDAKLGELPAGTDGNVIQNAILDVARAIERYQDHTKKSPEGGPGVSVSFFQMLYEVLIGQERGPRFGSFVALYGIDETRALIKKALAGELA.

Residues 54–62 carry the 'HIGH' region motif; sequence PSGLPHIGT. The short motif at 303–307 is the 'KMSKS' region element; that stretch reads KISKS. K306 is a binding site for ATP.

It belongs to the class-I aminoacyl-tRNA synthetase family.

Its subcellular location is the cytoplasm. The enzyme catalyses tRNA(Lys) + L-lysine + ATP = L-lysyl-tRNA(Lys) + AMP + diphosphate. The chain is Lysine--tRNA ligase from Brucella melitensis biotype 1 (strain ATCC 23456 / CCUG 17765 / NCTC 10094 / 16M).